The chain runs to 519 residues: MVLEPQIKSQLNQYLQLMEGDVLLKVSAGNDKVSEDMLSLVDELASMSSRITVEKTNLERTPSFSVNRPGEDTGIVFAGIPLGHEFTSLVLALLQVSGRAPKAEQNVIDQIKNIEGEYHFESYISLSCQNCPDVVQALNLMSVLNPGISHTMIDGAAFKDEVESKDIMAVPTVYLNGESFTSGRMTVEEILAQLGSGPDASELADKDPFDVLVVGGGPAGASSAIYAARKGIRTGIVADRFGGQIMDTLSIENFISQKYTEGPKLAASLEEHVKEYDIDVMKLQRAKRLEKKDLIEIELENGAVLKSKSVILSTGARWRNVGVPGEQEFKNKGVAYCPHCDGPLFEGKDVAVIGGGNSGVEAAIDLAGIVNHVTVLEFMPELKADEVLQERLNSLPNVTVIKNAQTKEITGDDKVNGISYMDRDTEEVHHIELAGVFVQIGLVPNTDWLDGTLERNRFGEIVVDSHGATNVPGVFAAGDCTNSAYKQIIISMGSGATAALGAFDYLIRNTTPAESAAAK.

Positions 1–183 (MVLEPQIKSQ…YLNGESFTSG (183 aa)) are membrane-binding. The interval 184 to 519 (RMTVEEILAQ…TTPAESAAAK (336 aa)) is catalytic. 210-241 (DVLVVGGGPAGASSAIYAARKGIRTGIVADRF) provides a ligand contact to FAD. A disulfide bridge links Cys-337 with Cys-340. Residue 349 to 379 (DVAVIGGGNSGVEAAIDLAGIVNHVTVLEFM) coordinates NAD(+). 469–479 (TNVPGVFAAGD) is a binding site for FAD.

The protein belongs to the class-II pyridine nucleotide-disulfide oxidoreductase family. Homodimer. The cofactor is FAD.

Its subcellular location is the cell membrane. It carries out the reaction a ubiquinone + NADH + 5 H(+)(in) = a ubiquinol + NAD(+) + 4 H(+)(out). Its function is as follows. Transfer of electrons from NADH to the respiratory chain. The immediate electron acceptor for the enzyme is believed to be ubiquinone. This Ferdinandcohnia aciditolerans (strain JCM 32973 / CCTCC AB 2017280 / YN-1) (Bacillus aciditolerans) protein is NADH dehydrogenase (ahpF).